A 911-amino-acid polypeptide reads, in one-letter code: Golgin IMH1 (911 aa).

Disordered regions lie at residues Leu16–Pro41 and Lys271–Asp314. Residues Phe101–Gln280 are a coiled coil. Residues Asn286–Lys299 are compositionally biased toward basic residues. 2 positions are modified to phosphoserine: Ser308 and Ser660. Coiled coils occupy residues Thr312–His735 and Ser766–Gln814. The segment at Gln814–Glu850 is disordered. Over residues Val822–Thr847 the composition is skewed to polar residues. At Ser827 the chain carries Phosphoserine. The residue at position 830 (Thr830) is a Phosphothreonine. The GRIP domain occupies Asp861–Ser909.

As to quaternary structure, forms oligomers and is present in high-molecular-mass complexes. Interacts with ARL1.

Its subcellular location is the cytoplasm. It is found in the golgi apparatus membrane. Involved in vesicular transport between an endosomal compartment and the Golgi apparatus. The chain is Golgin IMH1 (IMH1) from Saccharomyces cerevisiae (strain ATCC 204508 / S288c) (Baker's yeast).